We begin with the raw amino-acid sequence, 207 residues long: Ribosomal RNA large subunit methyltransferase E (207 aa).

S-adenosyl-L-methionine is bound by residues glycine 49, tryptophan 51, aspartate 69, aspartate 87, and aspartate 111. Catalysis depends on lysine 151, which acts as the Proton acceptor.

It belongs to the class I-like SAM-binding methyltransferase superfamily. RNA methyltransferase RlmE family.

It localises to the cytoplasm. It catalyses the reaction uridine(2552) in 23S rRNA + S-adenosyl-L-methionine = 2'-O-methyluridine(2552) in 23S rRNA + S-adenosyl-L-homocysteine + H(+). Functionally, specifically methylates the uridine in position 2552 of 23S rRNA at the 2'-O position of the ribose in the fully assembled 50S ribosomal subunit. This Oleidesulfovibrio alaskensis (strain ATCC BAA-1058 / DSM 17464 / G20) (Desulfovibrio alaskensis) protein is Ribosomal RNA large subunit methyltransferase E.